Here is a 329-residue protein sequence, read N- to C-terminus: Tryptophan--tRNA ligase (329 aa).

Residues 9-11 (QPS) and 17-18 (GN) each bind ATP. The 'HIGH' region signature appears at 10–18 (PSGIPTIGN). Residue Asp133 coordinates L-tryptophan. Residues 145–147 (GDD), Val184, and 193–197 (KMSKS) contribute to the ATP site. The 'KMSKS' region signature appears at 193–197 (KMSKS).

It belongs to the class-I aminoacyl-tRNA synthetase family. As to quaternary structure, homodimer.

The protein localises to the cytoplasm. It catalyses the reaction tRNA(Trp) + L-tryptophan + ATP = L-tryptophyl-tRNA(Trp) + AMP + diphosphate + H(+). Catalyzes the attachment of tryptophan to tRNA(Trp). The polypeptide is Tryptophan--tRNA ligase (Staphylococcus epidermidis (strain ATCC 35984 / DSM 28319 / BCRC 17069 / CCUG 31568 / BM 3577 / RP62A)).